We begin with the raw amino-acid sequence, 537 residues long: O-phosphoserine--tRNA(Cys) ligase (537 aa).

Substrate-binding positions include 186–188 (HMT), 231–233 (SAS), 273–274 (YY), and Asn317.

This sequence belongs to the class-II aminoacyl-tRNA synthetase family. O-phosphoseryl-tRNA(Cys) synthetase subfamily. Homotetramer. Interacts with SepCysS.

It catalyses the reaction tRNA(Cys) + O-phospho-L-serine + ATP = O-phospho-L-seryl-tRNA(Cys) + AMP + diphosphate. In terms of biological role, catalyzes the attachment of O-phosphoserine (Sep) to tRNA(Cys). The sequence is that of O-phosphoserine--tRNA(Cys) ligase from Methanococcus maripaludis (strain DSM 14266 / JCM 13030 / NBRC 101832 / S2 / LL).